The primary structure comprises 224 residues: Ribosomal RNA small subunit methyltransferase G (224 aa).

S-adenosyl-L-methionine-binding positions include Gly92, Leu97, 143 to 144 (VE), and Arg156.

The protein belongs to the methyltransferase superfamily. RNA methyltransferase RsmG family.

Its subcellular location is the cytoplasm. It catalyses the reaction guanosine(527) in 16S rRNA + S-adenosyl-L-methionine = N(7)-methylguanosine(527) in 16S rRNA + S-adenosyl-L-homocysteine. Its function is as follows. Specifically methylates the N7 position of guanine in position 527 of 16S rRNA. The sequence is that of Ribosomal RNA small subunit methyltransferase G from Albidiferax ferrireducens (strain ATCC BAA-621 / DSM 15236 / T118) (Rhodoferax ferrireducens).